The chain runs to 158 residues: Antitoxin TacA (158 aa).

This sequence belongs to the TacA antitoxin family. Forms a complex with cognate toxin TacT.

In terms of biological role, antitoxin component of a type II toxin-antitoxin (TA) system. Counteracts the toxic effect of cognate toxin TacT. TacA-TacT both represses and derepresses expression of its own operon. This is Antitoxin TacA from Mycobacterium tuberculosis (strain ATCC 25618 / H37Rv).